The chain runs to 1259 residues: Protein flightless-1 homolog (1259 aa).

LRR repeat units follow at residues 7-32 (LPFIRGVDLSGNDFKGGNFPEHVKSM), 33-55 (TSLRWLKLNRTGLCYLPEELASL), 56-78 (QKLEHLSVSHNSLTTLHGELSSL), 80-103 (NLRAVVARANNLKNSGVPDDIFQL), 104-126 (DDLSVLDLSHNQLTEIPRDLENS), 128-149 (NMLVLNLSHNSIDNIPNQLFIN), 150-173 (LTDLLYLDLSDNNLDSLPPQMRRL), 176-201 (LQTLILNNNPLMHAQLRQLPVMVSLQ), 222-245 (LSNLTDVDLSCNDLTRVPECLYSL), 247-268 (NLKRLNLSSNQISELSLCIDQW), 269-291 (TKLETLNLSRNQLTSLPSAICKL), 293-316 (KLKKLYVNSNKIDFDGLPSGVGKL), 317-339 (SNLVEFMAANNNLELVPEGLCRC), 340-363 (GKLKKLVLNKNRLVTLPEAIHFLT), and 365-385 (LEVLDVRENPNLVMPPKPVDR). Gelsolin-like repeat units follow at residues 509-589 (IPIQ…SEEF), 628-702 (NIRL…PEFW), 757-830 (DVVP…CQVF), and 1170-1225 (EKCS…RSKD).

As to expression, expressed in ventricular cardiomyocytes, where it particularly localizes to intercalated disks and costamere-like structures (at protein level).

The protein resides in the nucleus. It localises to the cytoplasm. It is found in the cytoskeleton. Its subcellular location is the microtubule organizing center. The protein localises to the centrosome. The protein resides in the cell junction. It localises to the focal adhesion. Functionally, is a regulator of actin polymerization, required for proper myofibril organization and the assembly of cardiomyocyte cell adhesion complexes. Is a regulator of the length of sarcomeric thin filaments. Regulates cytoskeletal rearrangements involved in cytokinesis and cell migration, by inhibiting Rac1-dependent paxillin phosphorylation. May play a role as coactivator in transcriptional activation by hormone-activated nuclear receptors (NR) and acts in cooperation with NCOA2 and CARM1. Involved in estrogen hormone signaling. The polypeptide is Protein flightless-1 homolog (Danio rerio (Zebrafish)).